Reading from the N-terminus, the 687-residue chain is Protein SDA1 homolog (687 aa).

3 disordered regions span residues 517–549 (SSDEEQEDEDPSGENQEGEEDGQTRAARISQMR), 561–587 (MKQLTKEVQPKLGKKRKRATTTEEPQG), and 615–687 (TVIA…KSKI). Over residues 520–537 (EEQEDEDPSGENQEGEED) the composition is skewed to acidic residues. Positions 644–666 (EKRRKKNFMMMRHNKLVRGKTKR) are enriched in basic residues. Residues 667–680 (SFRDKQIALRDSLL) show a composition bias toward basic and acidic residues.

This sequence belongs to the SDA1 family.

The protein resides in the nucleus. It localises to the nucleolus. Its function is as follows. Required for 60S pre-ribosomal subunits export to the cytoplasm. In Nematostella vectensis (Starlet sea anemone), this protein is Protein SDA1 homolog (sdad1).